A 206-amino-acid chain; its full sequence is Proteasome subunit beta 2 (206 aa).

Residues 1-10 constitute a propeptide, removed in mature form; by autocatalysis; sequence MLHLKEKLKG. Thr-11 functions as the Nucleophile in the catalytic mechanism.

It belongs to the peptidase T1B family. In terms of assembly, the 20S proteasome core is composed of 14 alpha and 14 beta subunits that assemble into four stacked heptameric rings, resulting in a barrel-shaped structure. The two inner rings, each composed of seven catalytic beta subunits, are sandwiched by two outer rings, each composed of seven alpha subunits. The catalytic chamber with the active sites is on the inside of the barrel. Has a gated structure, the ends of the cylinder being occluded by the N-termini of the alpha-subunits. Is capped at one or both ends by the proteasome regulatory ATPase, PAN.

It is found in the cytoplasm. It carries out the reaction Cleavage of peptide bonds with very broad specificity.. With respect to regulation, the formation of the proteasomal ATPase PAN-20S proteasome complex, via the docking of the C-termini of PAN into the intersubunit pockets in the alpha-rings, triggers opening of the gate for substrate entry. Interconversion between the open-gate and close-gate conformations leads to a dynamic regulation of the 20S proteasome proteolysis activity. Its function is as follows. Component of the proteasome core, a large protease complex with broad specificity involved in protein degradation. The polypeptide is Proteasome subunit beta 2 (Pyrococcus furiosus (strain ATCC 43587 / DSM 3638 / JCM 8422 / Vc1)).